We begin with the raw amino-acid sequence, 325 residues long: Glutarate 2-hydroxylase (325 aa).

3 residues coordinate Fe cation: His160, Asp162, and His292.

The protein belongs to the glutarate hydroxylase family. In terms of assembly, homotetramer. Requires Fe(2+) as cofactor.

It catalyses the reaction glutarate + 2-oxoglutarate + O2 = (S)-2-hydroxyglutarate + succinate + CO2. It participates in amino-acid degradation. Its function is as follows. Acts as an alpha-ketoglutarate-dependent dioxygenase catalyzing hydroxylation of glutarate (GA) to L-2-hydroxyglutarate (L2HG). Functions in a L-lysine degradation pathway that proceeds via cadaverine, glutarate and L-2-hydroxyglutarate. The protein is Glutarate 2-hydroxylase of Escherichia coli O7:K1 (strain IAI39 / ExPEC).